Reading from the N-terminus, the 494-residue chain is MSEANHKNIVVVGAGIIGTSVATMLSKVSPNWHIDMFERLEGAGIESSNENNNAGTGHAALCELNYTVEQDDGSIDASKAQEINEQFELSRQFWGNLVKNGDISNPEEFIQPLPHISFVMGPTNVNFLRKRYETLRTLPMFDTIEYTEDMETMRKWMPLMMENREPGHQMAASKIDEGTDVNYGALTRKLAHYLEQKSNVSLKYNHDVVDLTQREDGKWEVVVENRETKEKVTKIADKVFIGAGGHSIPLLQKSGVKQREHLGGFPISGQFLRCTNPDIIKQHAAKVYSKEPQGKPPMTVPHLDTRYINGKQTLLFGPYANIGPKFLKFGSNLDLFESIKPYNITTMLASAVKNVPLIKYSIDQMIKTKEGCMNYLRTFIPDAKDEDWELYTAGKRVQVIKDSEQHGKGFVVFGTEVVNSDDNSMIALLGESPGASTSLSVVLEVLEKNFADDKEAWEPVVKEMVPTYGRSLINDEKLMRETRRETSKNLHLNR.

It belongs to the MQO family. Requires FAD as cofactor.

The catalysed reaction is (S)-malate + a quinone = a quinol + oxaloacetate. It participates in carbohydrate metabolism; tricarboxylic acid cycle; oxaloacetate from (S)-malate (quinone route): step 1/1. This Staphylococcus epidermidis (strain ATCC 35984 / DSM 28319 / BCRC 17069 / CCUG 31568 / BM 3577 / RP62A) protein is Probable malate:quinone oxidoreductase 3.